The chain runs to 260 residues: Triosephosphate isomerase (260 aa).

11-13 provides a ligand contact to substrate; that stretch reads NWK. The active-site Electrophile is the H103. Catalysis depends on E175, which acts as the Proton acceptor. Residues G181, S220, and 241 to 242 contribute to the substrate site; that span reads GG.

The protein belongs to the triosephosphate isomerase family. As to quaternary structure, homodimer.

The protein resides in the cytoplasm. It catalyses the reaction D-glyceraldehyde 3-phosphate = dihydroxyacetone phosphate. It participates in carbohydrate biosynthesis; gluconeogenesis. Its pathway is carbohydrate degradation; glycolysis; D-glyceraldehyde 3-phosphate from glycerone phosphate: step 1/1. In terms of biological role, involved in the gluconeogenesis. Catalyzes stereospecifically the conversion of dihydroxyacetone phosphate (DHAP) to D-glyceraldehyde-3-phosphate (G3P). This Shewanella frigidimarina (strain NCIMB 400) protein is Triosephosphate isomerase.